Consider the following 235-residue polypeptide: Octanoyltransferase LIP2, mitochondrial (235 aa).

The transit peptide at 1-32 (MRSPRTLEVWKLGTVNYLKSLKLQEKLVSERK) directs the protein to the mitochondrion. Residues 34–218 (HQIPDTLLSL…CLAKAFSYDD (185 aa)) enclose the BPL/LPL catalytic domain. Substrate is bound by residues 79–86 (RGGDITFH), 147–149 (AIG), and 160–162 (GLA). The Acyl-thioester intermediate role is filled by Cys-178.

This sequence belongs to the LipB family. In terms of tissue distribution, expressed in leaves. Expressed in roots, rosette leaves, cauline leaves, stems and siliques.

The protein localises to the mitochondrion. It catalyses the reaction octanoyl-[ACP] + L-lysyl-[protein] = N(6)-octanoyl-L-lysyl-[protein] + holo-[ACP] + H(+). It functions in the pathway protein modification; protein lipoylation via endogenous pathway; protein N(6)-(lipoyl)lysine from octanoyl-[acyl-carrier-protein]: step 1/2. Its function is as follows. Catalyzes the transfer of endogenously produced octanoic acid from octanoyl-acyl-carrier-protein onto the lipoyl domains of lipoate-dependent enzymes. Lipoyl-ACP can also act as a substrate although octanoyl-ACP is likely to be the physiological substrate. Together with LIP1 is essential for mitochondrial protein lipoylation during seed development. Required for the lipoylation of mitochondrial 2-oxoglutarate dehydrogenase component E2 proteins in leaves and roots. This is Octanoyltransferase LIP2, mitochondrial from Arabidopsis thaliana (Mouse-ear cress).